The primary structure comprises 426 residues: 3-phosphoshikimate 1-carboxyvinyltransferase (426 aa).

Lys22, Ser23, and Arg27 together coordinate 3-phosphoshikimate. Lys22 serves as a coordination point for phosphoenolpyruvate. Gly96 and Arg124 together coordinate phosphoenolpyruvate. Ser170, Ser171, Gln172, Ser198, Asp314, Asn337, and Lys341 together coordinate 3-phosphoshikimate. Position 172 (Gln172) interacts with phosphoenolpyruvate. Asp314 acts as the Proton acceptor in catalysis. 3 residues coordinate phosphoenolpyruvate: Arg345, Arg387, and Lys412.

It belongs to the EPSP synthase family. Monomer.

It localises to the cytoplasm. It carries out the reaction 3-phosphoshikimate + phosphoenolpyruvate = 5-O-(1-carboxyvinyl)-3-phosphoshikimate + phosphate. It functions in the pathway metabolic intermediate biosynthesis; chorismate biosynthesis; chorismate from D-erythrose 4-phosphate and phosphoenolpyruvate: step 6/7. Functionally, catalyzes the transfer of the enolpyruvyl moiety of phosphoenolpyruvate (PEP) to the 5-hydroxyl of shikimate-3-phosphate (S3P) to produce enolpyruvyl shikimate-3-phosphate and inorganic phosphate. This chain is 3-phosphoshikimate 1-carboxyvinyltransferase, found in Shewanella sp. (strain ANA-3).